The primary structure comprises 1070 residues: Isoleucine--tRNA ligase (1070 aa).

The 'HIGH' region signature appears at 50–60 (PYTSGAAHMGT). Residues 606 to 610 (GMSKS) carry the 'KMSKS' region motif. Lys609 provides a ligand contact to ATP.

It belongs to the class-I aminoacyl-tRNA synthetase family. IleS type 2 subfamily. In terms of assembly, monomer. Requires Zn(2+) as cofactor.

It is found in the cytoplasm. It carries out the reaction tRNA(Ile) + L-isoleucine + ATP = L-isoleucyl-tRNA(Ile) + AMP + diphosphate. Catalyzes the attachment of isoleucine to tRNA(Ile). As IleRS can inadvertently accommodate and process structurally similar amino acids such as valine, to avoid such errors it has two additional distinct tRNA(Ile)-dependent editing activities. One activity is designated as 'pretransfer' editing and involves the hydrolysis of activated Val-AMP. The other activity is designated 'posttransfer' editing and involves deacylation of mischarged Val-tRNA(Ile). This is Isoleucine--tRNA ligase from Halobacterium salinarum (strain ATCC 700922 / JCM 11081 / NRC-1) (Halobacterium halobium).